A 277-amino-acid polypeptide reads, in one-letter code: Thiazole synthase (277 aa).

The Schiff-base intermediate with DXP role is filled by Lys119. 1-deoxy-D-xylulose 5-phosphate contacts are provided by residues Gly180, 206–207 (AG), and 228–229 (NT).

It belongs to the ThiG family. As to quaternary structure, homotetramer. Forms heterodimers with either ThiH or ThiS.

The protein localises to the plastid. It localises to the chloroplast. It carries out the reaction [ThiS sulfur-carrier protein]-C-terminal-Gly-aminoethanethioate + 2-iminoacetate + 1-deoxy-D-xylulose 5-phosphate = [ThiS sulfur-carrier protein]-C-terminal Gly-Gly + 2-[(2R,5Z)-2-carboxy-4-methylthiazol-5(2H)-ylidene]ethyl phosphate + 2 H2O + H(+). It participates in cofactor biosynthesis; thiamine diphosphate biosynthesis. Functionally, catalyzes the rearrangement of 1-deoxy-D-xylulose 5-phosphate (DXP) to produce the thiazole phosphate moiety of thiamine. Sulfur is provided by the thiocarboxylate moiety of the carrier protein ThiS. In vitro, sulfur can be provided by H(2)S. This is Thiazole synthase from Pyropia yezoensis (Susabi-nori).